Consider the following 273-residue polypeptide: MSTIRPVFYVSDGTGITAETIGHSLLTQFSGFNFVTDRMSFIDDAEKARDAAMRVRAAGERYQVRPVVVNSCVDPQLSMILAESGALMLDVFAPFIEPLERELNAPRHSRVGRAHGMVDFETYHRRINAMNFALSHDDGIALNYDEADVILVAVSRAGKTPTCIYLALHYGIRAANYPLTDEDLENERLPPRLRNYRSKLFGLTIDPERLQQIRQERRANSRYSAAETCRREVAIAERMFQMERIPSLSTTNTSIEEISSKVLSTLGLQREMF.

Residue 153 to 160 coordinates ADP; the sequence is AVSRAGKT.

This sequence belongs to the pyruvate, phosphate/water dikinase regulatory protein family. PSRP subfamily.

The catalysed reaction is [pyruvate, water dikinase] + ADP = [pyruvate, water dikinase]-phosphate + AMP + H(+). It catalyses the reaction [pyruvate, water dikinase]-phosphate + phosphate + H(+) = [pyruvate, water dikinase] + diphosphate. Functionally, bifunctional serine/threonine kinase and phosphorylase involved in the regulation of the phosphoenolpyruvate synthase (PEPS) by catalyzing its phosphorylation/dephosphorylation. In Xanthomonas oryzae pv. oryzae (strain MAFF 311018), this protein is Putative phosphoenolpyruvate synthase regulatory protein.